The following is a 998-amino-acid chain: Protein Smaug (998 aa).

Residues 1-37 (MKYATGTDNAMTSGISGQTNSSNSASNEMQPTTSTPT) show a composition bias toward polar residues. 3 disordered regions span residues 1-45 (MKYA…EATS), 50-69 (TATYANGNPNPSANPSQSQP), and 329-370 (LCPA…GSSS). Low complexity predominate over residues 329–338 (LCPASGSRSS). S564 and S575 each carry phosphoserine. The interval 583-763 (EFKPNYIKFH…KDLKFKLSKM (181 aa)) is interaction with cup. Residues 600–654 (GIGLWLKSLRLHKYIELFKNMTYEEMLLITEDFLQSVGVTKGASHKLALCIDKLK) form the SAM domain. Disordered regions lie at residues 773-892 (HVKP…MQQM) and 943-977 (NGSNDNLGLERNQQPQQQQQRKLSGGVSSAEQQPK). Polar residues-rich tracts occupy residues 801–822 (KSGSNDRINNRKNSNDMLNFSL) and 854–864 (HQPQYKSSSYP). S971 is modified (phosphoserine).

This sequence belongs to the SMAUG family. In terms of assembly, interacts with oskar (osk). Binds to the 3'-UTR of nos. Interacts with cup, which in turn recruits eIF4-E, leading to an indirect interaction between smg and eIF4-E that prevents mRNA translation.

Its subcellular location is the cytoplasm. Its function is as follows. Translation regulator that binds to the 3'-UTR of specific mRNAs such as nanos (nos) and prevent their translation. Prevents translation of unlocalized nos in the bulk cytoplasm via the recruitment of cup. The chain is Protein Smaug from Drosophila sechellia (Fruit fly).